A 569-amino-acid polypeptide reads, in one-letter code: MAETKVNFSDKLDEMERIKAHSDYLRGSIVQGLADRVTGAIAEEDTKLLKFHGSYMQDDRDIRDERRRQKLEPAYSFMIRVRAPGGASTAEQWIAMDDIANTYANGTIKLTTRQAFQFHGILKRNLKQTMKDINQSLLDTLAACGDVNRNVMCNPNPYQSDVHSEINQIASAISRHLSPKTQAYHEIWLDGEKVLDTSDEEPEPIYGKTYLPRKFKIGIAVPPSNDIDVYSQDIGLIAILENEQLVGFNVAVGGGMGMKHGNTATYPQVGRLIGYIPKEEVVDVCEKILTVQRDYGNREERTNARFKYTVDRLGVDWIRNEINNRLGWQLENKRPYHFEHNGDRYGWTEGSGKWHYTLFVQNGRVKDTEDYKLKTALRTIAEVHTGDFRLTPNQNLVIANVAAHKKNEIEKIITDFGITDGQHYTGLRRNSMACVAFPTCGLAMAESERYLPSLITKIEDLLDEAGLKEEEITIRMTGCPNGCARPALAEVAFIGKGPGKYNMYLGGGFIGDRLNKIYKENIGEAEILESLRPILLQYAKERTEGEHFGDFVVRAGIVEEVRDGQTFHS.

Positions 434, 440, 479, and 483 each coordinate [4Fe-4S] cluster. Cysteine 483 serves as a coordination point for siroheme.

The protein belongs to the nitrite and sulfite reductase 4Fe-4S domain family. As to quaternary structure, alpha(8)-beta(8). The alpha component is a flavoprotein, the beta component is a hemoprotein. Siroheme serves as cofactor. Requires [4Fe-4S] cluster as cofactor.

The catalysed reaction is hydrogen sulfide + 3 NADP(+) + 3 H2O = sulfite + 3 NADPH + 4 H(+). Its pathway is sulfur metabolism; hydrogen sulfide biosynthesis; hydrogen sulfide from sulfite (NADPH route): step 1/1. Its function is as follows. Component of the sulfite reductase complex that catalyzes the 6-electron reduction of sulfite to sulfide. This is one of several activities required for the biosynthesis of L-cysteine from sulfate. This Staphylococcus saprophyticus subsp. saprophyticus (strain ATCC 15305 / DSM 20229 / NCIMB 8711 / NCTC 7292 / S-41) protein is Sulfite reductase [NADPH] hemoprotein beta-component.